The following is a 349-amino-acid chain: Protein RecA (349 aa).

65 to 72 (GPESSGKT) serves as a coordination point for ATP.

The protein belongs to the RecA family.

The protein resides in the cytoplasm. Can catalyze the hydrolysis of ATP in the presence of single-stranded DNA, the ATP-dependent uptake of single-stranded DNA by duplex DNA, and the ATP-dependent hybridization of homologous single-stranded DNAs. It interacts with LexA causing its activation and leading to its autocatalytic cleavage. The sequence is that of Protein RecA from Clostridium acetobutylicum (strain ATCC 824 / DSM 792 / JCM 1419 / IAM 19013 / LMG 5710 / NBRC 13948 / NRRL B-527 / VKM B-1787 / 2291 / W).